We begin with the raw amino-acid sequence, 113 residues long: Nucleoid-associated protein P9303_00241 (113 aa).

The tract at residues threonine 90–aspartate 113 is disordered.

It belongs to the YbaB/EbfC family. In terms of assembly, homodimer.

Its subcellular location is the cytoplasm. It localises to the nucleoid. Its function is as follows. Binds to DNA and alters its conformation. May be involved in regulation of gene expression, nucleoid organization and DNA protection. The chain is Nucleoid-associated protein P9303_00241 from Prochlorococcus marinus (strain MIT 9303).